The sequence spans 144 residues: Large ribosomal subunit protein uL15 (144 aa).

A compositionally biased stretch (basic residues) spans 1 to 16; it reads MVVRKEKKSRKYRGYR. Positions 1–35 are disordered; that stretch reads MVVRKEKKSRKYRGYRTHGWGTKGQHRDRGAQGGR.

The protein belongs to the universal ribosomal protein uL15 family. Part of the 50S ribosomal subunit.

Functionally, binds to the 23S rRNA. This chain is Large ribosomal subunit protein uL15, found in Sulfolobus acidocaldarius (strain ATCC 33909 / DSM 639 / JCM 8929 / NBRC 15157 / NCIMB 11770).